A 225-amino-acid chain; its full sequence is PKHD-type hydroxylase YbiX (225 aa).

The 100-residue stretch at 78-177 folds into the Fe2OG dioxygenase domain; it reads TLSTPLFNRY…RVASFMWIQS (100 aa). H96, D98, and H158 together coordinate Fe cation. R168 serves as a coordination point for 2-oxoglutarate.

The cofactor is Fe(2+). It depends on L-ascorbate as a cofactor.

The chain is PKHD-type hydroxylase YbiX from Shigella boydii serotype 18 (strain CDC 3083-94 / BS512).